The chain runs to 324 residues: Phospho-N-acetylmuramoyl-pentapeptide-transferase (324 aa).

The next 10 membrane-spanning stretches (helical) occupy residues 9-29 (TFAVAFIITVIGVPLFIPFLV), 53-73 (TMGAVVFITAMLISFLIFSFI), 77-97 (VSAATWLLFIALALFGALGFL), 117-137 (FLGQVAISILFYLVYHLNGFA), 147-167 (IEVDLGWFFVIFILFWLVGFS), 176-196 (LDGLVSGLSVIAFSAFGVIAF), 201-221 (MDVAIFCFAIVGGMLGFLLFN), 227-247 (IFMGDTGSLALGGSIAAISIL), 253-273 (LLLLIGIIFVIETASVILQVF), and 304-324 (VLTFWGIGLIGAIISVCVVIF).

This sequence belongs to the glycosyltransferase 4 family. MraY subfamily. Requires Mg(2+) as cofactor.

The protein localises to the cell membrane. The enzyme catalyses UDP-N-acetyl-alpha-D-muramoyl-L-alanyl-gamma-D-glutamyl-meso-2,6-diaminopimeloyl-D-alanyl-D-alanine + di-trans,octa-cis-undecaprenyl phosphate = di-trans,octa-cis-undecaprenyl diphospho-N-acetyl-alpha-D-muramoyl-L-alanyl-D-glutamyl-meso-2,6-diaminopimeloyl-D-alanyl-D-alanine + UMP. The protein operates within cell wall biogenesis; peptidoglycan biosynthesis. Catalyzes the initial step of the lipid cycle reactions in the biosynthesis of the cell wall peptidoglycan: transfers peptidoglycan precursor phospho-MurNAc-pentapeptide from UDP-MurNAc-pentapeptide onto the lipid carrier undecaprenyl phosphate, yielding undecaprenyl-pyrophosphoryl-MurNAc-pentapeptide, known as lipid I. In Listeria monocytogenes serotype 4b (strain CLIP80459), this protein is Phospho-N-acetylmuramoyl-pentapeptide-transferase.